Here is a 119-residue protein sequence, read N- to C-terminus: Small ribosomal subunit protein bS6 (119 aa).

The protein belongs to the bacterial ribosomal protein bS6 family.

In terms of biological role, binds together with bS18 to 16S ribosomal RNA. The chain is Small ribosomal subunit protein bS6 from Thermosipho africanus (strain TCF52B).